The chain runs to 238 residues: Fatty acid metabolism regulator protein (238 aa).

An HTH gntR-type domain is found at 6 to 74; it reads KGPASFAEKY…HGKPTRVNNF (69 aa). Residues 34 to 53 constitute a DNA-binding region (H-T-H motif); it reads ERELSELIGVTRTTLREVLQ.

Homodimer.

It localises to the cytoplasm. Functionally, multifunctional regulator of fatty acid metabolism. The polypeptide is Fatty acid metabolism regulator protein (Shewanella baltica (strain OS155 / ATCC BAA-1091)).